Reading from the N-terminus, the 261-residue chain is MSESLHFTRHGPILEITLDRPKANAIDAKTSFEMGEVFLNFRDDPELRVAIITGGGEKFFSAGWDLKAAAEGEAPDADFGPGGFAGLTEIFDLDKPVIAAVNGYAFGGGFELALAADFIVCADNASFALPEAKLGIVPDSGGVLRLPKLLPPAIVNEMLMTGRRMDAEEALRWGIVNRVVSQQALMDSARELAQQLVNSAPLAIAALKEIYRATSEMPVEEGYRYIRSGALKHYPSVLHSEDAIEGPQAFAEKRDPVWKGR.

Residue Glu111 is the Nucleophile of the active site. The active-site Proton acceptor is Glu131.

It belongs to the enoyl-CoA hydratase/isomerase family.

The enzyme catalyses (R)-carnitinyl-CoA = crotonobetainyl-CoA + H2O. The protein operates within amine and polyamine metabolism; carnitine metabolism. In terms of biological role, catalyzes the reversible dehydration of L-carnitinyl-CoA to crotonobetainyl-CoA. The polypeptide is Carnitinyl-CoA dehydratase (Citrobacter koseri (strain ATCC BAA-895 / CDC 4225-83 / SGSC4696)).